The chain runs to 215 residues: UPF0502 protein YceH (215 aa).

K80 is modified (N6-acetyllysine).

This sequence belongs to the UPF0502 family.

The polypeptide is UPF0502 protein YceH (Shigella boydii serotype 18 (strain CDC 3083-94 / BS512)).